Here is a 230-residue protein sequence, read N- to C-terminus: Orotidine 5'-phosphate decarboxylase (230 aa).

Residues D10, K32, 59 to 68 (DLKYHDIPNT), T119, R180, Q189, G209, and R210 each bind substrate. K61 (proton donor) is an active-site residue.

This sequence belongs to the OMP decarboxylase family. Type 1 subfamily. Homodimer.

It catalyses the reaction orotidine 5'-phosphate + H(+) = UMP + CO2. Its pathway is pyrimidine metabolism; UMP biosynthesis via de novo pathway; UMP from orotate: step 2/2. Catalyzes the decarboxylation of orotidine 5'-monophosphate (OMP) to uridine 5'-monophosphate (UMP). This chain is Orotidine 5'-phosphate decarboxylase, found in Haemophilus ducreyi (strain 35000HP / ATCC 700724).